The primary structure comprises 224 residues: Phosphoribosylformylglycinamidine synthase subunit PurQ (224 aa).

The Glutamine amidotransferase type-1 domain maps to 4–224; it reads FGIIVFPGSN…ATDGLAMFIS (221 aa). Cys87 functions as the Nucleophile in the catalytic mechanism. Active-site residues include His204 and Glu206.

As to quaternary structure, part of the FGAM synthase complex composed of 1 PurL, 1 PurQ and 2 PurS subunits.

It is found in the cytoplasm. It carries out the reaction N(2)-formyl-N(1)-(5-phospho-beta-D-ribosyl)glycinamide + L-glutamine + ATP + H2O = 2-formamido-N(1)-(5-O-phospho-beta-D-ribosyl)acetamidine + L-glutamate + ADP + phosphate + H(+). It catalyses the reaction L-glutamine + H2O = L-glutamate + NH4(+). Its pathway is purine metabolism; IMP biosynthesis via de novo pathway; 5-amino-1-(5-phospho-D-ribosyl)imidazole from N(2)-formyl-N(1)-(5-phospho-D-ribosyl)glycinamide: step 1/2. Part of the phosphoribosylformylglycinamidine synthase complex involved in the purines biosynthetic pathway. Catalyzes the ATP-dependent conversion of formylglycinamide ribonucleotide (FGAR) and glutamine to yield formylglycinamidine ribonucleotide (FGAM) and glutamate. The FGAM synthase complex is composed of three subunits. PurQ produces an ammonia molecule by converting glutamine to glutamate. PurL transfers the ammonia molecule to FGAR to form FGAM in an ATP-dependent manner. PurS interacts with PurQ and PurL and is thought to assist in the transfer of the ammonia molecule from PurQ to PurL. The polypeptide is Phosphoribosylformylglycinamidine synthase subunit PurQ (Synechocystis sp. (strain ATCC 27184 / PCC 6803 / Kazusa)).